A 479-amino-acid chain; its full sequence is Aspartyl/glutamyl-tRNA(Asn/Gln) amidotransferase subunit B (479 aa).

Belongs to the GatB/GatE family. GatB subfamily. In terms of assembly, heterotrimer of A, B and C subunits.

It catalyses the reaction L-glutamyl-tRNA(Gln) + L-glutamine + ATP + H2O = L-glutaminyl-tRNA(Gln) + L-glutamate + ADP + phosphate + H(+). It carries out the reaction L-aspartyl-tRNA(Asn) + L-glutamine + ATP + H2O = L-asparaginyl-tRNA(Asn) + L-glutamate + ADP + phosphate + 2 H(+). In terms of biological role, allows the formation of correctly charged Asn-tRNA(Asn) or Gln-tRNA(Gln) through the transamidation of misacylated Asp-tRNA(Asn) or Glu-tRNA(Gln) in organisms which lack either or both of asparaginyl-tRNA or glutaminyl-tRNA synthetases. The reaction takes place in the presence of glutamine and ATP through an activated phospho-Asp-tRNA(Asn) or phospho-Glu-tRNA(Gln). This is Aspartyl/glutamyl-tRNA(Asn/Gln) amidotransferase subunit B from Deinococcus radiodurans (strain ATCC 13939 / DSM 20539 / JCM 16871 / CCUG 27074 / LMG 4051 / NBRC 15346 / NCIMB 9279 / VKM B-1422 / R1).